Here is a 265-residue protein sequence, read N- to C-terminus: Acrosomal protein SP-10 (265 aa).

Positions 1–21 (MNRFLLLMSLYLLGSARGTSS) are cleaved as a signal peptide. Positions 62 to 181 (LNTLSEHGSS…EQASGAPISS (120 aa)) are disordered. 16 tandem repeats follow at residues 66-70 (SEHGS), 71-75 (SEHGS), 85-88 (SGEH), 91-95 (SEHAS), 110-114 (VGEQP), 115-119 (SGEQP), 120-123 (SGEH), 125-129 (SGEQP), 135-139 (SGEQP), 140-144 (SDEQP), 145-148 (SGEH), 150-154 (SGEQP), 155-159 (SGEQA), 160-164 (SGEQP), 165-168 (SGEH), and 170-174 (SGEQA). The tract at residues 66-95 (SEHGSSEHGSSKHTVAEHTSGEHAESEHAS) is 3 X 5 AA repeats of S-E-H-[GA]-S. Basic and acidic residues predominate over residues 69–110 (GSSEHGSSKHTVAEHTSGEHAESEHASGEPAATEHAEGEHTV). Residues 85 to 168 (SGEHAESEHA…ASGEQPSGEH (84 aa)) form a 4 X 4 AA repeats of S-G-E-H region. The interval 110–174 (VGEQPSGEQP…SGEHASGEQA (65 aa)) is 9 X 5 AA repeats of [SV]-G-E-Q-[PSA]. The span at 152-163 (EQPSGEQASGEQ) shows a compositional bias: polar residues. A glycan (N-linked (GlcNAc...) asparagine) is linked at Asn-258.

As to expression, testis.

The protein resides in the cytoplasmic vesicle. It localises to the secretory vesicle. It is found in the acrosome. This chain is Acrosomal protein SP-10 (ACRV1), found in Homo sapiens (Human).